We begin with the raw amino-acid sequence, 295 residues long: Protease Rv3090 (295 aa).

2 helical membrane passes run 2-22 (TWQI…ALFW) and 37-57 (VTIA…FTIV).

The protein resides in the cell membrane. The protein localises to the secreted. It is found in the cell wall. Functionally, protease that triggers late cell apoptosis and contributes to the pathogenicity and dissemination of M.tuberculosis. In a mouse model of infection, can induce hepatocyte and lung cell apoptosis and cause pathological damage to the spleen, liver and lungs. Specifically stimulates the secretion of inflammatory cytokines including TNF-alpha, IL-6 and IL-1 beta. Can degrade casein in vitro. The polypeptide is Protease Rv3090 (Mycobacterium tuberculosis (strain ATCC 25618 / H37Rv)).